The chain runs to 371 residues: Queuine tRNA-ribosyltransferase (371 aa).

The active-site Proton acceptor is the D89. Residues 89-93 (DSGGF), D143, Q185, and G212 each bind substrate. The RNA binding stretch occupies residues 243 to 249 (GVGKPED). The active-site Nucleophile is D262. Positions 267 to 271 (TRNAR) are RNA binding; important for wobble base 34 recognition. Positions 300, 302, 305, and 331 each coordinate Zn(2+).

It belongs to the queuine tRNA-ribosyltransferase family. As to quaternary structure, homodimer. Within each dimer, one monomer is responsible for RNA recognition and catalysis, while the other monomer binds to the replacement base PreQ1. Zn(2+) serves as cofactor.

It carries out the reaction 7-aminomethyl-7-carbaguanine + guanosine(34) in tRNA = 7-aminomethyl-7-carbaguanosine(34) in tRNA + guanine. It functions in the pathway tRNA modification; tRNA-queuosine biosynthesis. Catalyzes the base-exchange of a guanine (G) residue with the queuine precursor 7-aminomethyl-7-deazaguanine (PreQ1) at position 34 (anticodon wobble position) in tRNAs with GU(N) anticodons (tRNA-Asp, -Asn, -His and -Tyr). Catalysis occurs through a double-displacement mechanism. The nucleophile active site attacks the C1' of nucleotide 34 to detach the guanine base from the RNA, forming a covalent enzyme-RNA intermediate. The proton acceptor active site deprotonates the incoming PreQ1, allowing a nucleophilic attack on the C1' of the ribose to form the product. After dissociation, two additional enzymatic reactions on the tRNA convert PreQ1 to queuine (Q), resulting in the hypermodified nucleoside queuosine (7-(((4,5-cis-dihydroxy-2-cyclopenten-1-yl)amino)methyl)-7-deazaguanosine). This Pseudomonas syringae pv. tomato (strain ATCC BAA-871 / DC3000) protein is Queuine tRNA-ribosyltransferase.